We begin with the raw amino-acid sequence, 307 residues long: UDP-3-O-acyl-N-acetylglucosamine deacetylase (307 aa).

Zn(2+) contacts are provided by histidine 78, histidine 241, and aspartate 245. The active-site Proton donor is histidine 268.

The protein belongs to the LpxC family. Zn(2+) serves as cofactor.

It catalyses the reaction a UDP-3-O-[(3R)-3-hydroxyacyl]-N-acetyl-alpha-D-glucosamine + H2O = a UDP-3-O-[(3R)-3-hydroxyacyl]-alpha-D-glucosamine + acetate. It participates in glycolipid biosynthesis; lipid IV(A) biosynthesis; lipid IV(A) from (3R)-3-hydroxytetradecanoyl-[acyl-carrier-protein] and UDP-N-acetyl-alpha-D-glucosamine: step 2/6. Its function is as follows. Catalyzes the hydrolysis of UDP-3-O-myristoyl-N-acetylglucosamine to form UDP-3-O-myristoylglucosamine and acetate, the committed step in lipid A biosynthesis. The sequence is that of UDP-3-O-acyl-N-acetylglucosamine deacetylase from Paracidovorax citrulli (strain AAC00-1) (Acidovorax citrulli).